The sequence spans 326 residues: Undecaprenyl-phosphate 4-deoxy-4-formamido-L-arabinose transferase (326 aa).

2 helical membrane passes run 235-255 (LLSV…VLLI) and 270-290 (VFTL…GMGL).

The protein belongs to the glycosyltransferase 2 family.

It localises to the cell inner membrane. The enzyme catalyses UDP-4-deoxy-4-formamido-beta-L-arabinose + di-trans,octa-cis-undecaprenyl phosphate = 4-deoxy-4-formamido-alpha-L-arabinopyranosyl di-trans,octa-cis-undecaprenyl phosphate + UDP. It functions in the pathway glycolipid biosynthesis; 4-amino-4-deoxy-alpha-L-arabinose undecaprenyl phosphate biosynthesis; 4-amino-4-deoxy-alpha-L-arabinose undecaprenyl phosphate from UDP-4-deoxy-4-formamido-beta-L-arabinose and undecaprenyl phosphate: step 1/2. Its pathway is bacterial outer membrane biogenesis; lipopolysaccharide biosynthesis. Its function is as follows. Catalyzes the transfer of 4-deoxy-4-formamido-L-arabinose from UDP to undecaprenyl phosphate. The modified arabinose is attached to lipid A and is required for resistance to polymyxin and cationic antimicrobial peptides. In Serratia proteamaculans (strain 568), this protein is Undecaprenyl-phosphate 4-deoxy-4-formamido-L-arabinose transferase.